Reading from the N-terminus, the 259-residue chain is MADS-box protein ZMM17 (259 aa).

The 61-residue stretch at 1 to 61 folds into the MADS-box domain; that stretch reads MGRGKIEIKR…GKMFEYCSPA (61 aa). Residues 85-175 enclose the K-box domain; the sequence is DQQILLEMTR…YRMINENQQA (91 aa). Residues 237-259 are disordered; the sequence is PTQPNLQDPAAPCGGLHGHGLQL.

As to expression, strong expression in female inflorescences (ears), but also weak expression in male inflorescences (tassels). At early stages of the development of the female spiklet, expressed in all organ primordia but later restricted to the ovule and the developing silk. At very late stages of development, expression becomes restricted to parts of the silk.

The protein localises to the nucleus. Its function is as follows. Probable transcription factor. The protein is MADS-box protein ZMM17 (M17) of Zea mays (Maize).